The primary structure comprises 588 residues: Aspartate--tRNA ligase (588 aa).

Glu-174 lines the L-aspartate pocket. The aspartate stretch occupies residues 198-201; that stretch reads QLFK. Arg-220 serves as a coordination point for L-aspartate. Residues 220 to 222 and Gln-229 each bind ATP; that span reads RDE. His-448 contacts L-aspartate. Glu-482 contacts ATP. Arg-489 is an L-aspartate binding site. Position 534 to 537 (534 to 537) interacts with ATP; it reads GLDR.

This sequence belongs to the class-II aminoacyl-tRNA synthetase family. Type 1 subfamily. Homodimer.

It is found in the cytoplasm. The catalysed reaction is tRNA(Asp) + L-aspartate + ATP = L-aspartyl-tRNA(Asp) + AMP + diphosphate. In terms of biological role, catalyzes the attachment of L-aspartate to tRNA(Asp) in a two-step reaction: L-aspartate is first activated by ATP to form Asp-AMP and then transferred to the acceptor end of tRNA(Asp). This chain is Aspartate--tRNA ligase, found in Exiguobacterium sibiricum (strain DSM 17290 / CCUG 55495 / CIP 109462 / JCM 13490 / 255-15).